The chain runs to 58 residues: UPF0391 membrane protein Bxeno_A2959 (58 aa).

The next 2 helical transmembrane spans lie at 4–24 (WALFFAVVAVIAGVLGFTGVA) and 33–53 (FLFIVFVILCVVFLVLGFVVT).

This sequence belongs to the UPF0391 family.

It localises to the cell membrane. The chain is UPF0391 membrane protein Bxeno_A2959 from Paraburkholderia xenovorans (strain LB400).